The primary structure comprises 128 residues: Translation initiation factor 5A (128 aa).

Lys-35 carries the hypusine modification.

The protein belongs to the eIF-5A family.

It is found in the cytoplasm. In terms of biological role, functions by promoting the formation of the first peptide bond. This is Translation initiation factor 5A (eif5a) from Archaeoglobus fulgidus (strain ATCC 49558 / DSM 4304 / JCM 9628 / NBRC 100126 / VC-16).